The sequence spans 191 residues: Fe/S biogenesis protein NfuA (191 aa).

Residues Cys149 and Cys152 each contribute to the [4Fe-4S] cluster site.

The protein belongs to the NfuA family. As to quaternary structure, homodimer. [4Fe-4S] cluster serves as cofactor.

In terms of biological role, involved in iron-sulfur cluster biogenesis. Binds a 4Fe-4S cluster, can transfer this cluster to apoproteins, and thereby intervenes in the maturation of Fe/S proteins. Could also act as a scaffold/chaperone for damaged Fe/S proteins. This Buchnera aphidicola subsp. Baizongia pistaciae (strain Bp) protein is Fe/S biogenesis protein NfuA.